Reading from the N-terminus, the 122-residue chain is Large ribosomal subunit protein uL14 (122 aa).

The protein belongs to the universal ribosomal protein uL14 family. As to quaternary structure, part of the 50S ribosomal subunit. Forms a cluster with proteins L3 and L19. In the 70S ribosome, L14 and L19 interact and together make contacts with the 16S rRNA in bridges B5 and B8. Can interact with ribosomal silencing factor RsfS, which may inhibit ribosomal subunit association.

Its function is as follows. Binds to 23S rRNA. Forms part of two intersubunit bridges in the 70S ribosome. This Synechocystis sp. (strain ATCC 27184 / PCC 6803 / Kazusa) protein is Large ribosomal subunit protein uL14.